Consider the following 662-residue polypeptide: Transcription activator of gluconeogenesis NECHADRAFT_59099 (662 aa).

The interval 1-61 is disordered; that stretch reads MPHEMEENGA…KDPLRPRRKK (61 aa). 2 stretches are compositionally biased toward basic and acidic residues: residues 25–34 and 43–56; these read TFLKDDEKMT and TEVK…DPLR. Residues 66 to 94 constitute a DNA-binding region (zn(2)-C6 fungal-type); sequence CFACQRAHLTCGDERPCQRCIKRGLADAC. 3 disordered regions span residues 105-149, 502-524, and 580-606; these read LHDA…TGSN, YSGR…MTTP, and YRAP…SSRV. Polar residues-rich tracts occupy residues 121–130 and 137–149; these read YNPTPTPSRT and SSQS…TGSN. Positions 448–519 constitute a PAS domain; that stretch reads TLVEYDDFLQ…TNTPDHNSQG (72 aa). Residues 582–593 are compositionally biased toward basic and acidic residues; the sequence is APQDPDQKEPGS.

Belongs to the ERT1/acuK family.

The protein localises to the nucleus. Transcription factor which regulates nonfermentable carbon utilization. Activator of gluconeogenetic genes. The sequence is that of Transcription activator of gluconeogenesis NECHADRAFT_59099 from Fusarium vanettenii (strain ATCC MYA-4622 / CBS 123669 / FGSC 9596 / NRRL 45880 / 77-13-4) (Fusarium solani subsp. pisi).